A 201-amino-acid polypeptide reads, in one-letter code: Small ribosomal subunit protein uS4c (201 aa).

Residues 20–44 (GLTSKRPRAGSDLRNQSRSGKKSQY) form a disordered region. The region spanning 89–152 (MRLDNILFRL…NSRTLVQNLL (64 aa)) is the S4 RNA-binding domain.

This sequence belongs to the universal ribosomal protein uS4 family. Part of the 30S ribosomal subunit. Contacts protein S5. The interaction surface between S4 and S5 is involved in control of translational fidelity.

The protein resides in the plastid. It is found in the chloroplast. Functionally, one of the primary rRNA binding proteins, it binds directly to 16S rRNA where it nucleates assembly of the body of the 30S subunit. With S5 and S12 plays an important role in translational accuracy. This Arabis hirsuta (Hairy rock-cress) protein is Small ribosomal subunit protein uS4c (rps4).